Reading from the N-terminus, the 346-residue chain is [LysW]-lysine/[LysW]-ornithine hydrolase (346 aa).

Residue H68 participates in Zn(2+) binding. The active site involves D70. Residue D92 coordinates Zn(2+). E122 serves as the catalytic Proton acceptor. 3 residues coordinate Zn(2+): E123, E146, and H317.

Belongs to the peptidase M20A family. LysK subfamily. Zn(2+) is required as a cofactor. It depends on Co(2+) as a cofactor.

Its subcellular location is the cytoplasm. It carries out the reaction [amino-group carrier protein]-C-terminal-gamma-(L-lysyl)-L-glutamate + H2O = [amino-group carrier protein]-C-terminal-L-glutamate + L-lysine. It catalyses the reaction [amino-group carrier protein]-C-terminal-gamma-(L-ornithyl)-L-glutamate + H2O = [amino-group carrier protein]-C-terminal-L-glutamate + L-ornithine. The protein operates within amino-acid biosynthesis; L-lysine biosynthesis via AAA pathway; L-lysine from L-alpha-aminoadipate (Thermus route): step 5/5. It participates in amino-acid biosynthesis; L-arginine biosynthesis. Functionally, catalyzes the release of L-lysine from [LysW]-gamma-L-lysine and the release of L-ornithine from [LysW]-L-ornithine. The polypeptide is [LysW]-lysine/[LysW]-ornithine hydrolase (Saccharolobus islandicus (strain Y.G.57.14 / Yellowstone #1) (Sulfolobus islandicus)).